The chain runs to 1405 residues: DNA-directed RNA polymerase subunit beta' (1405 aa).

Zn(2+) contacts are provided by Cys70, Cys72, Cys85, and Cys88. Mg(2+)-binding residues include Asp460, Asp462, and Asp464. Residues Cys815, Cys890, Cys897, and Cys900 each contribute to the Zn(2+) site.

The protein belongs to the RNA polymerase beta' chain family. The RNAP catalytic core consists of 2 alpha, 1 beta, 1 beta' and 1 omega subunit. When a sigma factor is associated with the core the holoenzyme is formed, which can initiate transcription. Mg(2+) serves as cofactor. It depends on Zn(2+) as a cofactor.

It carries out the reaction RNA(n) + a ribonucleoside 5'-triphosphate = RNA(n+1) + diphosphate. Functionally, DNA-dependent RNA polymerase catalyzes the transcription of DNA into RNA using the four ribonucleoside triphosphates as substrates. The protein is DNA-directed RNA polymerase subunit beta' of Xanthomonas campestris pv. campestris (strain 8004).